Reading from the N-terminus, the 125-residue chain is Small ribosomal subunit protein uS12 (125 aa).

The interval 1-28 is disordered; that stretch reads MPTISQLIGSERKRLTRKTKSPALKSCP. Aspartate 89 is subject to 3-methylthioaspartic acid. Positions 104–125 are disordered; that stretch reads TAGVKDRRQSRSKYGAKAPKND.

The protein belongs to the universal ribosomal protein uS12 family. In terms of assembly, part of the 30S ribosomal subunit. Contacts proteins S8 and S17. May interact with IF1 in the 30S initiation complex.

Its function is as follows. With S4 and S5 plays an important role in translational accuracy. In terms of biological role, interacts with and stabilizes bases of the 16S rRNA that are involved in tRNA selection in the A site and with the mRNA backbone. Located at the interface of the 30S and 50S subunits, it traverses the body of the 30S subunit contacting proteins on the other side and probably holding the rRNA structure together. The combined cluster of proteins S8, S12 and S17 appears to hold together the shoulder and platform of the 30S subunit. The protein is Small ribosomal subunit protein uS12 of Prochlorococcus marinus subsp. pastoris (strain CCMP1986 / NIES-2087 / MED4).